A 4241-amino-acid chain; its full sequence is MVSKILPGLLKKILGNYIEGLDTLSIPWWKGQIVLENLKFKKELFSSNELPFDLLSGVVKRVVITIPILHFLKDPIVVNIDGVFLLFGPKDIINTFSNYGNDKSNKKDIVIDDNDGGISIDSNSNNNNKKNAPSSSSSNDDFFKKPNLTKEELKKIQIQIDKEQSKESNDGYSADSESFKFRMIKKLLKCIRIQLNNLHICYQDDSTSPGEIFSVGITMESFTFQTTDSQWVPLSKNTSTHQQQQPTFNPYVGSQQQQQQQPQQNTEINYENDSEHNPFMNNKNSDEGISSSSSSSSFNNNNLNIPTLNLNDNYMDSEAYTTNTQPTPKSEQYQQQQQQQQPLGQIVDQIITYKLASIFNFSIYWDSQFGKTRMVTPEDMDVLLMHSIPRQKAKINHKYILQPISGFLKICLTEDSIESVNKEGVFNSIANNFNVSIGLKQIDLQLMDIQYRDMLNLLSFYQDWRRVLRYHKFRPHCRVKGNARIWWHFAFRSIISDFRSKKTEMTWKEIEDSKRVRECYIKLYTEKFIKGKLGRLDQNLIDEIEKKVTYEDIVLFRTIAEKDLKVTKRKDLDQFTESSGWWLGGWLGFQHHHQNNNQDKITLTNEQLTFLERYLKVNLKVLAGKPHSSVSLIFFLNVKRLSISILDWQENHTVVPLANIDITEVNLQMEQSHNTKLKFSAESLDIFDRCSPNTKFENIILEKSRFNSSNINPDNSANSIGSFILDRQISNSEFLNGVYTGVNGTNNNNNKKFIDISIVLNPPEDTTDYFIYFKLEPFYFINSKPFVDTMIPFFTHANQEALDRLKYSFIKKIKILQEYLINELKHLVRNQKVADIKLDIAIPGLVFPESYDREDTMVLVCNMGNLILKTQPHNSEWDSMDFSEINEQDETDEIFVRYCNLLKDRVKWWSDNCPIKKINEPIEKQSYIINYVQQHRQTIENLGTGNGINNNNSGGGGNGGNASNSSEDDGKYPEQDDLDDSKVEKEGFDSCDTDWNKVSVNINNAQFYDGIVLTISDIYVKVCDCTQINNFNYLISPFSLDIFLELCSRPYDLKLPQIKCKAELSELNLQVSDKELYEIAKIVGKNGILEYFMDMDRKSSKELADMYEIVQVKKPKKKSFEVQFSLFSDTKSILNSRKRTKERLVKTTLLRFFFTSNAINMKLNYLDSCTLSLTMDQIRCRSLVKFMQMNIQFDISSIEIKDSNSITPVLSIFPYNLNNNNNNNNNNNNNNNNNNNNNNNRNLNNNNNNNNNNQKPECLNEFPISITAKSISKNSLDYDYIDFVLTLTTQYIRINFPKECVMALIAIIGTVVTNTTNFYETKKSILTVEGSFYQGRVGQFTQSNTTTTTSPRYHHQNHHNHQHKKQNRHRLSTRLETNEFDPNDLKSKITINIPSFGLTLSTIENDLVAFQFEDISIDGIFQLPLIDCELKVRDMKFIDYTGSDGPYPYMLITQKSQSPMVPVVRMHLVCHSNSKTQEWGFSRLINIAVGKIQITFLLQTINLIRLFIHDITSSLKEYCPFLFKVMAIVDDNNKPSSKDNNNNNNNNNNSDSDSDSDTDSSSSSENNYNNNIDLNSPVVEIVKKKKNLTNLEIEIDNNVVIVPKNSRSRSAIRFSVGRILLGLDQMDPTVDAVFVKIYGINMASKYEDSIDPIISDPIKMDIRFIHMFETSLKDKSIEVIIKIDKIHLKLSQYQYNLLYNTYQQNINQSIVPAPPSNSYSTVERQDILLDIRLEFKDFVELNLENEKTNDSRFFSMLIQRPIICCSVWNNGDSDFLIKTTGISVRDKNKLVVVPNGFQEMINITPYDLDVPIKNVINQSINEVFFDIVKMNIDDNGIDINITIEYLSIFFDLPWVSKLITFLSPIIDADYIGNSCSNSTNKSSTTINTQLLPPPPPPPPISLNKSGVNLTNQQQNEEFNSKFNKDWKIFLKVEVSAKNANIMVGDLNSKNELVLLMNSSLLINSQFGTEGLMKIILEYQCIKGLIGNKTKDPIYSTKNPSATTMSFISASSRDLGAQKNTTHYLWKELKKSSKLFLETFKTNIQVCLVPEGNQFYFCELNDLSLVFSGKAYKYLLDIYECVSDIIYGVSKSKDITNNNLVQKHSRSSSISTDLPIPINLRRSSIISTNLMQQQQQQQQQQQQQQQQQQQQQQQQQQNNNNNQNNQASSNNNNNNNNNVSGNTINNKSVPNVHDKTKNQFYQIKTRSVEMLRAHQTRVTEKYQASLPSNGKIAETEENENGDHTFTSDDDDDEGEDEDIGEGFSLDHSTSSAPTSRSNYNNINEPMIDLKSSKKQDDSNMVTKIQFSQISISIKNLNIIIMDDLSKHKMNTPIFNMKLNYGFMKAVLKTTRIEVEFDSVFQMNYFNNRIAYWEPFIEPWLFKSMMTLGKELSIDIYSTDLLNINFTIPLMDNISLFLRTYSKEFGYPFNLICAPSDSNNTDNSSNNGKKSHSNRHSLIGQIKKIKEKKTKTSYSPFFIRNRTGSRLRYRLETQDGKPVAGVNHKMEGSTVRVVNIENYGLFFELDSGDCSPIKFLPDVQINLETFSQLVLAVELLGVEKSISIPLDKIKIYDYQVYLDSSTSTKLYANIGIKNGTKLITIQFPIVLKNLTSFPIDIATVTSGFGDTQMPNYSTTIRVGQARAPLPINRMRNVQIKFKPSGDQYKWSTEALDVNNVIEGEDKFSCILKNGEKIYYIKGYIFKKNQCFIIKLCHMLKVKNLLPYPIQFKLKSPIENIPLLKRETQATVQDQEKTEVYEIPLLDKFKIQVRIADKDGTFEKSEWSEIRSIVEREDNNEIGVITISDSNNLIVDYLHLNVEFESYKGEKKIVFYNQYWIFNKSGLNLYCKKSYHSKDYSESQTHFNHPLQQLDSSNTNTTIKPSDAIIVTPDQWYSHQLIKESPLLFSFKKLKDMENSIRIRVGDSKWSHKISIAAIGDRGTIVIDSSEKRHSRSYHLGLSVDLAPNLKTKIVVFTPRFVFHNLFPYTILVQQCGANTDSTTIRIPPSCSVPFYYFINNTGESSKPTLKFKIDYQEFDWSPPFSIQTFSDFTFNVFNNNNNDNVENYKQPDIHCNPYIRIKTCLEVATILVIISELKEPPYRILNNTKYQLSIQQKKVGKVLTVEPSSSIPYVWDLPLEDHILEVLVHISTNQSEKASYKMDKIKTFRPMEFNDDHNPVVIKAIVEADESTRVLTLSDKTSFQISKYEEENLRQSFRIHFTGIGISVINANPTELLYVSIHDILCEYFISSFLQKLEMKITNIQVDNQLSKVTPYSHPVLLFADNLLPNTPFLQVRIVRSMKMKNIDYYHHVSLKMQELNIKVEEKFLYVLLDFFNSLDFSFWTGNKKTNTLHNMDMLTPMYNEDIGEGFIDEMVARALPSIYGKKMYFESLDIEPISMFLTFDLSNKSGSIASLEQAPMVKAFRRIGFVIVSFQHAHIFLHGFSLSHAFGSNEELLAPIFNHYFSEGLSEVYKILGAFNLFGNPVGLVTNFGIGFKEFFVSMGKGLVGNSFTDSFGQGSKSLAKHSVYGIFDSGAKLTGSAGKVLSTLSMDQRYILERQYIIGESPNTFMQGLILGGRAAKTAVYRGFSGFVKLPYEGGKEAGPKGVVKGIGKGTAGLVLKPIAAGFDFASKVSEGIKNSTQLSIERKRIRFPRPLFSDSPLETYDSAESYGHFLFLTYIITAGKLRRISADQINLPLMEVVSKDEKYVSHLIYKNRKTLLFTNKRIIYLYDTDGFRTKFDIKYTRIHGVSEKSDHIDIKIDKKHKLSFLYNEKNKKIDYRIKCVGEEKSYIFYRIIEMIKTYKPFADEELTVNGLKADPTTMIPIPPPPPPPLQQQLLYGSNIIQQQPPIQYFNDGSSSSSNLTGGRTIQPIIFTNDAGPMRNDLNPILENLLAQQPNKNMEIPIWISQGFNPPKPPDTLIPQRFRDPNLINNNNNYYYPNGSGYVYSQPPLYDQYGNQIPPPPPLPSHPLAIDRPTTTTTTNTTTTPYQSSQNIHSTPYPTETPQSVVLKEDISKAIHTPSASSLKKLKTPHHYNVRFEPSSSLGPQDFDIHTIRLQNQQYQHSGSGAPPPPPIITTTTNSTIPPPSSNINQRQLQHQFSSNSIIETPRYKSMARQQQFQQPPPPPPLPSNNRLSLTPSGSGNINYSDKFEVALNTIIQIQKIQSQQMSSLQKNQRDLQKLLFQQQSTEFDTLRNQQEQIQNIISQYHPLSPSKASLVSKLSNELESTNSNVVISPPTGGASN.

Residues 5–97 enclose the Chorein N-terminal domain; the sequence is ILPGLLKKIL…GPKDIINTFS (93 aa). Positions 120–140 are enriched in low complexity; that stretch reads IDSNSNNNNKKNAPSSSSSND. Disordered stretches follow at residues 120 to 143, 234 to 340, 942 to 986, 1220 to 1256, 1345 to 1369, 1534 to 1571, 2148 to 2192, and 2217 to 2282; these read IDSN…DDFF, LSKN…QQQQ, LGTG…VEKE, NNNN…NQKP, TTTT…QNRH, KPSS…YNNN, QQQQ…PNVH, and VTEK…NNIN. A compositionally biased stretch (polar residues) spans 234-254; the sequence is LSKNTSTHQQQQPTFNPYVGS. The span at 255–264 shows a compositional bias: low complexity; that stretch reads QQQQQQQPQQ. Positions 279-289 are enriched in polar residues; that stretch reads FMNNKNSDEGI. Composition is skewed to low complexity over residues 290–313, 325–340, and 942–952; these read SSSS…LNDN, QPTP…QQQQ, and LGTGNGINNNN. A compositionally biased stretch (basic and acidic residues) spans 968-986; the sequence is DDGKYPEQDDLDDSKVEKE. Residues 1220–1253 show a composition bias toward low complexity; the sequence is NNNNNNNNNNNNNNNNNNNNNRNLNNNNNNNNNN. Over residues 1352 to 1369 the composition is skewed to basic residues; it reads RYHHQNHHNHQHKKQNRH. Low complexity-rich tracts occupy residues 1538-1551, 1559-1571, and 2148-2177; these read KDNN…NNSD, DSSS…YNNN, and QQQQ…NNNN. The segment covering 2178 to 2188 has biased composition (polar residues); it reads VSGNTINNKSV. Residues 2246 to 2259 are compositionally biased toward acidic residues; that stretch reads SDDDDDEGEDEDIG. A compositionally biased stretch (polar residues) spans 2265–2282; sequence DHSTSSAPTSRSNYNNIN. Positions 2825–3134 constitute an SHR-BD domain; it reads KIVFYNQYWI…IPYVWDLPLE (310 aa). Disordered stretches follow at residues 3973 to 4000, 4059 to 4094, and 4109 to 4140; these read PTTT…YPTE, YQHS…RQLQ, and KSMA…SGSG. Residues 3974–3984 are compositionally biased toward low complexity; the sequence is TTTTTTNTTTT. Positions 3985 to 4000 are enriched in polar residues; the sequence is PYQSSQNIHSTPYPTE. Residues 4128-4140 are compositionally biased toward polar residues; sequence SNNRLSLTPSGSG.

The protein belongs to the VPS13 family.

Its subcellular location is the membrane. Functionally, mediates the transfer of lipids between membranes at organelle contact sites. In Dictyostelium discoideum (Social amoeba), this protein is Intermembrane lipid transfer protein vps13E (vps13E).